We begin with the raw amino-acid sequence, 414 residues long: L-cysteine:1D-myo-inositol 2-amino-2-deoxy-alpha-D-glucopyranoside ligase (414 aa).

A Zn(2+)-binding site is contributed by C43. L-cysteinyl-5'-AMP is bound by residues 43-46 (CGIT), T58, and 81-83 (NIT). The 'HIGH' region signature appears at 45-55 (ITPYDATHLGH). The short motif at 189 to 194 (ERGGDP) is the 'ERGGDP' region element. W229 lines the L-cysteinyl-5'-AMP pocket. A Zn(2+)-binding site is contributed by C233. L-cysteinyl-5'-AMP is bound at residue 251 to 253 (GSD). H258 contacts Zn(2+). I285 contributes to the L-cysteinyl-5'-AMP binding site. Positions 291 to 295 (KMSKS) match the 'KMSKS' region motif.

The protein belongs to the class-I aminoacyl-tRNA synthetase family. MshC subfamily. Monomer. Zn(2+) serves as cofactor.

The enzyme catalyses 1D-myo-inositol 2-amino-2-deoxy-alpha-D-glucopyranoside + L-cysteine + ATP = 1D-myo-inositol 2-(L-cysteinylamino)-2-deoxy-alpha-D-glucopyranoside + AMP + diphosphate + H(+). Its function is as follows. Catalyzes the ATP-dependent condensation of GlcN-Ins and L-cysteine to form L-Cys-GlcN-Ins. The polypeptide is L-cysteine:1D-myo-inositol 2-amino-2-deoxy-alpha-D-glucopyranoside ligase (mshC) (Mycobacterium bovis (strain ATCC BAA-935 / AF2122/97)).